We begin with the raw amino-acid sequence, 308 residues long: Probable 5-dehydro-4-deoxyglucarate dehydratase (308 aa).

It belongs to the DapA family.

It catalyses the reaction 5-dehydro-4-deoxy-D-glucarate + H(+) = 2,5-dioxopentanoate + CO2 + H2O. The protein operates within carbohydrate acid metabolism; D-glucarate degradation; 2,5-dioxopentanoate from D-glucarate: step 2/2. In Bacillus subtilis (strain 168), this protein is Probable 5-dehydro-4-deoxyglucarate dehydratase (ycbC).